The primary structure comprises 167 residues: tRNA-specific adenosine deaminase (167 aa).

Residues 6–117 (FSHEYWMRHA…DAKTGAAGSL (112 aa)) enclose the CMP/dCMP-type deaminase domain. Zn(2+) is bound at residue His57. Glu59 functions as the Proton donor in the catalytic mechanism. Zn(2+)-binding residues include Cys87 and Cys90.

This sequence belongs to the cytidine and deoxycytidylate deaminase family. Homodimer. The cofactor is Zn(2+).

It carries out the reaction adenosine(34) in tRNA + H2O + H(+) = inosine(34) in tRNA + NH4(+). In terms of biological role, catalyzes the deamination of adenosine to inosine at the wobble position 34 of tRNA(Arg2). This Escherichia coli O157:H7 protein is tRNA-specific adenosine deaminase.